Here is a 59-residue protein sequence, read N- to C-terminus: Large ribosomal subunit protein bL32 (59 aa).

The disordered stretch occupies residues 1 to 59 (MAVQQNKKSPSKRGMHRAHDFLTTPPLAVESTTGEAHLRHHISPAGFYRGKKVTKGKGE). Basic residues predominate over residues 49–59 (RGKKVTKGKGE).

Belongs to the bacterial ribosomal protein bL32 family.

In Dechloromonas aromatica (strain RCB), this protein is Large ribosomal subunit protein bL32.